Reading from the N-terminus, the 61-residue chain is Large ribosomal subunit protein bL32 (61 aa).

The span at 1–16 shows a compositional bias: basic residues; it reads MAVPKRKTSPSKRGMR. The tract at residues 1–40 is disordered; the sequence is MAVPKRKTSPSKRGMRRSADALKAPTYIEDKNSGELRRPH. Basic and acidic residues predominate over residues 28–40; that stretch reads IEDKNSGELRRPH.

This sequence belongs to the bacterial ribosomal protein bL32 family.

The chain is Large ribosomal subunit protein bL32 from Sinorhizobium medicae (strain WSM419) (Ensifer medicae).